The following is a 943-amino-acid chain: Isoleucine--tRNA ligase (943 aa).

A 'HIGH' region motif is present at residues 58–68; it reads PYANGKIHIGH. L-isoleucyl-5'-AMP is bound at residue glutamate 567. Residues 608 to 612 carry the 'KMSKS' region motif; the sequence is KMSKS. Lysine 611 is a binding site for ATP. Cysteine 906, cysteine 909, cysteine 926, and cysteine 929 together coordinate Zn(2+).

The protein belongs to the class-I aminoacyl-tRNA synthetase family. IleS type 1 subfamily. In terms of assembly, monomer. Zn(2+) serves as cofactor.

Its subcellular location is the cytoplasm. It carries out the reaction tRNA(Ile) + L-isoleucine + ATP = L-isoleucyl-tRNA(Ile) + AMP + diphosphate. Functionally, catalyzes the attachment of isoleucine to tRNA(Ile). As IleRS can inadvertently accommodate and process structurally similar amino acids such as valine, to avoid such errors it has two additional distinct tRNA(Ile)-dependent editing activities. One activity is designated as 'pretransfer' editing and involves the hydrolysis of activated Val-AMP. The other activity is designated 'posttransfer' editing and involves deacylation of mischarged Val-tRNA(Ile). In Pseudomonas putida (strain ATCC 47054 / DSM 6125 / CFBP 8728 / NCIMB 11950 / KT2440), this protein is Isoleucine--tRNA ligase.